A 237-amino-acid chain; its full sequence is Probable transcriptional regulatory protein EAT1b_0153 (237 aa).

Belongs to the TACO1 family. YeeN subfamily.

The protein localises to the cytoplasm. This chain is Probable transcriptional regulatory protein EAT1b_0153, found in Exiguobacterium sp. (strain ATCC BAA-1283 / AT1b).